The following is a 117-amino-acid chain: Putative pterin-4-alpha-carbinolamine dehydratase (117 aa).

The protein belongs to the pterin-4-alpha-carbinolamine dehydratase family.

It catalyses the reaction (4aS,6R)-4a-hydroxy-L-erythro-5,6,7,8-tetrahydrobiopterin = (6R)-L-erythro-6,7-dihydrobiopterin + H2O. This Colwellia psychrerythraea (strain 34H / ATCC BAA-681) (Vibrio psychroerythus) protein is Putative pterin-4-alpha-carbinolamine dehydratase.